Consider the following 365-residue polypeptide: Phosphatidylcholine:ceramide cholinephosphotransferase 2 (365 aa).

The segment at 9–50 (LEGHLESQTNNSTNTYTSPTEAVEEEDKNGKGKPKTLSNGLR) is disordered. Residues 15–28 (SQTNNSTNTYTSPT) show a composition bias toward low complexity. Transmembrane regions (helical) follow at residues 80 to 100 (GIAF…ITVV), 128 to 148 (FSVS…QWLF), 159 to 179 (FFFI…VTTL), 219 to 239 (ILCG…TYLF), and 248 to 268 (FWWY…CILV). The active site involves His229. Active-site residues include His272 and Asp276. The chain crosses the membrane as a helical span at residues 273-290 (YTVDVIIAYYITTRLFWW). At 291–365 (YHSMANEKNL…KIGEDNEKST (75 aa)) the chain is on the cytoplasmic side. 4 S-palmitoyl cysteine lipidation sites follow: Cys331, Cys332, Cys343, and Cys348.

The protein belongs to the sphingomyelin synthase family. In terms of processing, palmitoylated on Cys-331, Cys-332, Cys-343 and Cys-348; which plays an important role in plasma membrane localization. Expression restricted to late round spermatids and elongating spermatids but not detected in late elongate spermatids and Sertoli cells (at protein level).

It is found in the cell membrane. The protein resides in the golgi apparatus membrane. It catalyses the reaction an N-acylsphing-4-enine + a 1,2-diacyl-sn-glycero-3-phosphocholine = a sphingomyelin + a 1,2-diacyl-sn-glycerol. It carries out the reaction an N-acylsphinganine + a 1,2-diacyl-sn-glycero-3-phosphocholine = an N-acylsphinganine-1-phosphocholine + a 1,2-diacyl-sn-glycerol. The enzyme catalyses an N-acyl-(4R)-4-hydroxysphinganine + a 1,2-diacyl-sn-glycero-3-phosphocholine = an N-acyl-(4R)-4-hydroxysphinganine-phosphocholine + a 1,2-diacyl-sn-glycerol. The catalysed reaction is an N-acylsphing-4-enine + a 1,2-diacyl-sn-glycero-3-phosphoethanolamine = an N-acylsphing-4-enine 1-phosphoethanolamine + a 1,2-diacyl-sn-glycerol. It catalyses the reaction an N-acylsphinganine + a 1,2-diacyl-sn-glycero-3-phosphoethanolamine = an N-acylsphinganine-1-phosphoethanolamine + a 1,2-diacyl-sn-glycerol. It carries out the reaction an N-acyl-(4R)-4-hydroxysphinganine + a 1,2-diacyl-sn-glycero-3-phosphoethanolamine = an N-acyl-(4R)-4-hydroxysphinganine-1-phosphoethanolamine + a 1,2-diacyl-sn-glycerol. The enzyme catalyses 1,2-dihexadecanoyl-sn-glycero-3-phosphocholine + an N-acylsphing-4-enine = 1,2-dihexadecanoyl-sn-glycerol + a sphingomyelin. The catalysed reaction is 1-(9Z-octadecenoyl)-2-acyl-sn-3-glycerol + a sphingomyelin = a 1-(9Z-octadecenoyl)-2-acyl-sn-glycero-3-phosphocholine + an N-acylsphing-4-enine. It catalyses the reaction N-hexadecanoylsphinganine + a 1,2-diacyl-sn-glycero-3-phosphocholine = N-hexadecanoyl-sphinganine-1-phosphocholine + a 1,2-diacyl-sn-glycerol. It carries out the reaction N-hexadecanoyl-(4R)-hydroxysphinganine + a 1,2-diacyl-sn-glycero-3-phosphocholine = N-hexadecanoyl-(4R)-hydroxysphinganine-phosphocholine + a 1,2-diacyl-sn-glycerol. The enzyme catalyses N-hexadecanoylsphinganine + a 1,2-diacyl-sn-glycero-3-phosphoethanolamine = N-hexadecanoyl-sphinganine-1-phosphoethanolamine + a 1,2-diacyl-sn-glycerol. The catalysed reaction is N-hexadecanoyl-(4R)-hydroxysphinganine + a 1,2-diacyl-sn-glycero-3-phosphoethanolamine = N-hexadecanoyl-(4R)-hydroxysphinganine-1-phosphoethanolamine + a 1,2-diacyl-sn-glycerol. It functions in the pathway sphingolipid metabolism. Functionally, sphingomyelin synthase that primarily contributes to sphingomyelin synthesis and homeostasis at the plasma membrane. Catalyzes the reversible transfer of phosphocholine moiety in sphingomyelin biosynthesis: in the forward reaction transfers phosphocholine head group of phosphatidylcholine (PC) on to ceramide (CER) to form ceramide phosphocholine (sphingomyelin, SM) and diacylglycerol (DAG) as by-product, and in the reverse reaction transfers phosphocholine from SM to DAG to form PC and CER. The direction of the reaction appears to depend on the levels of CER and DAG in the plasma membrane. Does not use free phosphorylcholine or CDP-choline as donors. Can also transfer phosphoethanolamine head group of phosphatidylethanolamine (PE) on to ceramide (CER) to form ceramide phosphoethanolamine (CPE). Regulates receptor-mediated signal transduction via mitogenic DAG and proapoptotic CER, as well as via SM, a structural component of membrane rafts that serve as platforms for signal transduction and protein sorting. To a lesser extent, plays a role in secretory transport via regulation of DAG pool at the Golgi apparatus and its downstream effects on PRKD1. Required for normal bone matrix mineralization. This is Phosphatidylcholine:ceramide cholinephosphotransferase 2 (Sgms2) from Rattus norvegicus (Rat).